Consider the following 245-residue polypeptide: Acyl-protein thioesterase 1 (245 aa).

Catalysis depends on charge relay system residues Ser-126, Asp-182, and His-214.

This sequence belongs to the AB hydrolase superfamily. AB hydrolase 2 family.

Its subcellular location is the cytoplasm. The protein localises to the nucleus. The catalysed reaction is S-hexadecanoyl-L-cysteinyl-[protein] + H2O = L-cysteinyl-[protein] + hexadecanoate + H(+). Its function is as follows. Hydrolyzes fatty acids from S-acylated cysteine residues in proteins with a strong preference for palmitoylated G-alpha proteins over other acyl substrates. Mediates the deacylation of G-alpha proteins such as GPA1 in vivo, but has weak or no activity toward palmitoylated Ras proteins. Has weak lysophospholipase activity in vitro; however such activity may not exist in vivo. This is Acyl-protein thioesterase 1 from Neurospora crassa (strain ATCC 24698 / 74-OR23-1A / CBS 708.71 / DSM 1257 / FGSC 987).